The sequence spans 412 residues: Chorismate synthase (412 aa).

The NADP(+) site is built by arginine 40 and arginine 46. Residues 135–137 (RAS), 256–257 (QA), glycine 300, 315–319 (KPIST), and arginine 341 contribute to the FMN site. The span at 391-404 (QREPRQESSDEQPA) shows a compositional bias: basic and acidic residues. The segment at 391–412 (QREPRQESSDEQPARRAANTAG) is disordered.

It belongs to the chorismate synthase family. As to quaternary structure, homotetramer. It depends on FMNH2 as a cofactor.

The enzyme catalyses 5-O-(1-carboxyvinyl)-3-phosphoshikimate = chorismate + phosphate. Its pathway is metabolic intermediate biosynthesis; chorismate biosynthesis; chorismate from D-erythrose 4-phosphate and phosphoenolpyruvate: step 7/7. In terms of biological role, catalyzes the anti-1,4-elimination of the C-3 phosphate and the C-6 proR hydrogen from 5-enolpyruvylshikimate-3-phosphate (EPSP) to yield chorismate, which is the branch point compound that serves as the starting substrate for the three terminal pathways of aromatic amino acid biosynthesis. This reaction introduces a second double bond into the aromatic ring system. The chain is Chorismate synthase from Mycobacteroides abscessus (strain ATCC 19977 / DSM 44196 / CCUG 20993 / CIP 104536 / JCM 13569 / NCTC 13031 / TMC 1543 / L948) (Mycobacterium abscessus).